Reading from the N-terminus, the 590-residue chain is 2-hydroxyacyl-CoA lyase (590 aa).

Residues G43, Q128, Q255, 273-274, and R362 contribute to the 2-hydroxyisobutanoyl-CoA site; that span reads RS. 410–412 contributes to the thiamine diphosphate binding site; the sequence is GDL. R417 is a 2-hydroxyisobutanoyl-CoA binding site. G433 contributes to the thiamine diphosphate binding site. D460 is a Mg(2+) binding site. Thiamine diphosphate-binding positions include 461–462 and 487–492; these read GA and NRAWNI. Residues N487 and A489 each contribute to the Mg(2+) site. The Proton acceptor role is filled by E493. Residue 561 to 564 participates in 2-hydroxyisobutanoyl-CoA binding; it reads DSGK. The segment at 566 to 590 is C-terminal lid; the sequence is LGFVPDYQALTPWNDAEVARRQEGI.

This sequence belongs to the TPP enzyme family. In terms of assembly, a homotetramer formed by a dimer of dimers; active sites are located in the dimer interface. Mg(2+) is required as a cofactor. Thiamine diphosphate serves as cofactor.

It catalyses the reaction 2-hydroxyisobutanoyl-CoA = formyl-CoA + acetone. Activity is stimulated by thiamine diphosphate. Functionally, a lyase that reversibly degrades 2-hydroxyisobutyryl-CoA (2-HIB-CoA) to acetone and formyl-CoA. Probably also cleaves 2-hydroxy-2-methylbutyryl-CoA to butanone and formyl-CoA. Does not act on 2-hydroxy-2-ethylbutyryl-CoA. A C-terminal lid closes the active site upon substrate binding, and with residues Leu-127 and Ile-492 restricts the size of the active site cavity so it can only use short-chain (C4 and C5) acyl substrates. Part of a pathway that allows cells to grow on 2-methylpropane-1,2-diol or 2-hydroxyisobutyric acid (2-HIBA) as a sole carbon source. The chain is 2-hydroxyacyl-CoA lyase from Actinomycetospora chiangmaiensis (strain DSM 45062 / JCM 15998 / CCTCC AA 205017 / NBRC 104400 / YIM 0006).